Consider the following 539-residue polypeptide: Eukaryotic translation initiation factor 3 subunit L (539 aa).

A PCI domain is found at 302–514 (TFSSILLYIQ…IHIADTKVSH (213 aa)).

The protein belongs to the eIF-3 subunit L family. Component of the eukaryotic translation initiation factor 3 (eIF-3) complex.

The protein localises to the cytoplasm. Component of the eukaryotic translation initiation factor 3 (eIF-3) complex, which is involved in protein synthesis of a specialized repertoire of mRNAs and, together with other initiation factors, stimulates binding of mRNA and methionyl-tRNAi to the 40S ribosome. The eIF-3 complex specifically targets and initiates translation of a subset of mRNAs involved in cell proliferation. The polypeptide is Eukaryotic translation initiation factor 3 subunit L (Anopheles gambiae (African malaria mosquito)).